Consider the following 381-residue polypeptide: MTNLRKTHPLMKIINHSFIDLPAPSNISAWWNFGSLLGICLVIQILTGLFLAMHYTSDTLTAFSSVAHICRDVNYGWLIRNLHANGASMFFMCLFLHVGRGIYYGSYLYKETWNIGVILLLTVMATAFVGYVLPWGQMSFWGATVITNLLSAIPYIGTTLAEWIWGGFLVDKATLTRFFAFHFILPFIIMALVIVHLLFLHETGSNNPSGINPNSDKIPFHPYYTIKDALGLMFLLLVLLTLALFSPDSLGDPDNFSPANPLNTPPHIKPEWYFLFAYAILRSIPNKLGGVLALLASILILLIIPLLHTANQRSMMFRPVSQTLFWILTANLITLTWIGGQPVEQPFIIIGQSASILLSMLILVLMPLAGLFENYMLKPKW.

Transmembrane regions (helical) follow at residues 33-53, 77-98, 113-133, and 178-198; these read FGSLLGICLVIQILTGLFLAM, WLIRNLHANGASMFFMCLFLHV, WNIGVILLLTVMATAFVGYVL, and FFAFHFILPFIIMALVIVHLL. Residues H83 and H97 each contribute to the heme b site. Heme b contacts are provided by H182 and H196. A ubiquinone is bound at residue H201. 4 helical membrane passes run 226–246, 288–308, 320–340, and 347–367; these read IKDALGLMFLLLVLLTLALFS, LGGVLALLASILILLIIPLLH, VSQTLFWILTANLITLTWIGG, and FIIIGQSASILLSMLILVLMP.

It belongs to the cytochrome b family. In terms of assembly, the cytochrome bc1 complex contains 11 subunits: 3 respiratory subunits (MT-CYB, CYC1 and UQCRFS1), 2 core proteins (UQCRC1 and UQCRC2) and 6 low-molecular weight proteins (UQCRH/QCR6, UQCRB/QCR7, UQCRQ/QCR8, UQCR10/QCR9, UQCR11/QCR10 and a cleavage product of UQCRFS1). This cytochrome bc1 complex then forms a dimer. It depends on heme b as a cofactor.

The protein localises to the mitochondrion inner membrane. Functionally, component of the ubiquinol-cytochrome c reductase complex (complex III or cytochrome b-c1 complex) that is part of the mitochondrial respiratory chain. The b-c1 complex mediates electron transfer from ubiquinol to cytochrome c. Contributes to the generation of a proton gradient across the mitochondrial membrane that is then used for ATP synthesis. The polypeptide is Cytochrome b (MT-CYB) (Ningaui yvonnae (Southern ningaui)).